The following is a 339-amino-acid chain: Dihydroorotase (339 aa).

Zn(2+) contacts are provided by histidine 12 and histidine 14. Residues 14-16 (HVR) and asparagine 40 each bind substrate. The Zn(2+) site is built by lysine 94, histidine 133, histidine 167, and aspartate 239. An N6-carboxylysine modification is found at lysine 94. Histidine 133 serves as a coordination point for substrate. Residue aspartate 239 is part of the active site. Positions 243 and 255 each coordinate substrate.

The protein belongs to the metallo-dependent hydrolases superfamily. DHOase family. Class II DHOase subfamily. As to quaternary structure, homodimer. Zn(2+) is required as a cofactor.

The catalysed reaction is (S)-dihydroorotate + H2O = N-carbamoyl-L-aspartate + H(+). It functions in the pathway pyrimidine metabolism; UMP biosynthesis via de novo pathway; (S)-dihydroorotate from bicarbonate: step 3/3. Functionally, catalyzes the reversible cyclization of carbamoyl aspartate to dihydroorotate. In Helicobacter acinonychis (strain Sheeba), this protein is Dihydroorotase.